A 325-amino-acid polypeptide reads, in one-letter code: HTH-type transcriptional regulator BbuR (325 aa).

Positions 15-72 (LDTDLLNVFCWVAKTQSFSRAAAELGTSQPVITRKIGRLEECLGVALFVRSNRGCVLT) constitute an HTH lysR-type domain. The H-T-H motif DNA-binding region spans 32-51 (FSRAAAELGTSQPVITRKIG).

Belongs to the LysR transcriptional regulatory family.

This Bordetella bronchiseptica (strain ATCC BAA-588 / NCTC 13252 / RB50) (Alcaligenes bronchisepticus) protein is HTH-type transcriptional regulator BbuR (bbuR).